The primary structure comprises 194 residues: Cilia- and flagella-associated protein 107 (194 aa).

2 mn regions span residues 45 to 60 (TPQS…FPDH) and 95 to 107 (ISTY…RHGY).

In terms of assembly, microtubule inner protein component of sperm flagellar doublet microtubules. In terms of tissue distribution, expressed in airway epithelial cells.

It localises to the cytoplasm. The protein localises to the cytoskeleton. Its subcellular location is the cilium axoneme. The protein resides in the flagellum axoneme. Functionally, microtubule inner protein (MIP) part of the dynein-decorated doublet microtubules (DMTs) in cilia axoneme, which is required for motile cilia beating. The chain is Cilia- and flagella-associated protein 107 from Homo sapiens (Human).